The primary structure comprises 101 residues: Large ribosomal subunit protein eL30 (101 aa).

The protein belongs to the eukaryotic ribosomal protein eL30 family.

The chain is Large ribosomal subunit protein eL30 from Pyrobaculum neutrophilum (strain DSM 2338 / JCM 9278 / NBRC 100436 / V24Sta) (Thermoproteus neutrophilus).